Consider the following 182-residue polypeptide: Nucleoid-associated protein At2g24020, chloroplastic (182 aa).

Residues 1–48 constitute a chloroplast transit peptide; sequence MASMAATTNFTKSMLFPFSHVSGNASLNSQRRTWPKQYKSKNGYRSLR.

The protein belongs to the YbaB/EbfC family. Homodimer. Interacts with ALB3 and ALB4.

The protein resides in the plastid. It is found in the chloroplast stroma. In terms of biological role, participates with ALB4 in thylakoid protein targeting. May function with specific subset of thylakoidal proteins. Binds to DNA and alters its conformation. May be involved in regulation of gene expression, nucleoid organization and DNA protection. This chain is Nucleoid-associated protein At2g24020, chloroplastic, found in Arabidopsis thaliana (Mouse-ear cress).